The following is a 459-amino-acid chain: Bifunctional protein GlmU (459 aa).

The segment at 1–230 (MSNRFAVILA…FDETLGVNDR (230 aa)) is pyrophosphorylase. Residues 9 to 12 (LAAG), K23, Q73, and 78 to 79 (GT) each bind UDP-N-acetyl-alpha-D-glucosamine. D103 serves as a coordination point for Mg(2+). 4 residues coordinate UDP-N-acetyl-alpha-D-glucosamine: G140, E155, N170, and N228. Mg(2+) is bound at residue N228. The linker stretch occupies residues 231-251 (VALSQAEIIMKNRINRKNMVN). Residues 252–459 (GVTIIDPSNT…VDQLLNKKKS (208 aa)) form an N-acetyltransferase region. UDP-N-acetyl-alpha-D-glucosamine-binding residues include R333 and K351. The Proton acceptor role is filled by H363. The UDP-N-acetyl-alpha-D-glucosamine site is built by Y366 and N377. Acetyl-CoA-binding positions include 386–387 (NY), A423, and R440.

The protein in the N-terminal section; belongs to the N-acetylglucosamine-1-phosphate uridyltransferase family. In the C-terminal section; belongs to the transferase hexapeptide repeat family. As to quaternary structure, homotrimer. Requires Mg(2+) as cofactor.

It is found in the cytoplasm. It catalyses the reaction alpha-D-glucosamine 1-phosphate + acetyl-CoA = N-acetyl-alpha-D-glucosamine 1-phosphate + CoA + H(+). The catalysed reaction is N-acetyl-alpha-D-glucosamine 1-phosphate + UTP + H(+) = UDP-N-acetyl-alpha-D-glucosamine + diphosphate. It functions in the pathway nucleotide-sugar biosynthesis; UDP-N-acetyl-alpha-D-glucosamine biosynthesis; N-acetyl-alpha-D-glucosamine 1-phosphate from alpha-D-glucosamine 6-phosphate (route II): step 2/2. It participates in nucleotide-sugar biosynthesis; UDP-N-acetyl-alpha-D-glucosamine biosynthesis; UDP-N-acetyl-alpha-D-glucosamine from N-acetyl-alpha-D-glucosamine 1-phosphate: step 1/1. The protein operates within bacterial outer membrane biogenesis; LPS lipid A biosynthesis. Its function is as follows. Catalyzes the last two sequential reactions in the de novo biosynthetic pathway for UDP-N-acetylglucosamine (UDP-GlcNAc). The C-terminal domain catalyzes the transfer of acetyl group from acetyl coenzyme A to glucosamine-1-phosphate (GlcN-1-P) to produce N-acetylglucosamine-1-phosphate (GlcNAc-1-P), which is converted into UDP-GlcNAc by the transfer of uridine 5-monophosphate (from uridine 5-triphosphate), a reaction catalyzed by the N-terminal domain. This is Bifunctional protein GlmU from Bacillus cereus (strain AH187).